The following is a 71-amino-acid chain: Protein SlyX homolog (71 aa).

This sequence belongs to the SlyX family.

The chain is Protein SlyX homolog from Azotobacter vinelandii (strain DJ / ATCC BAA-1303).